Reading from the N-terminus, the 247-residue chain is Adenosylcobinamide-GDP ribazoletransferase (247 aa).

The next 5 helical transmembrane spans lie at 34-54 (IVMFPFIGLILGGVSGLIFIL), 59-79 (CGIPLAALFCILALALLTGGF), 113-133 (GGLALIFVLLAKILVVSELAL), 138-158 (MLAALAAACAAGRGSAVLLMY), and 187-207 (LAVIVATVLLPGMQGLAAMVV).

The protein belongs to the CobS family. Mg(2+) serves as cofactor.

The protein resides in the cell inner membrane. The catalysed reaction is alpha-ribazole + adenosylcob(III)inamide-GDP = adenosylcob(III)alamin + GMP + H(+). It catalyses the reaction alpha-ribazole 5'-phosphate + adenosylcob(III)inamide-GDP = adenosylcob(III)alamin 5'-phosphate + GMP + H(+). Its pathway is cofactor biosynthesis; adenosylcobalamin biosynthesis; adenosylcobalamin from cob(II)yrinate a,c-diamide: step 7/7. Functionally, joins adenosylcobinamide-GDP and alpha-ribazole to generate adenosylcobalamin (Ado-cobalamin). Also synthesizes adenosylcobalamin 5'-phosphate from adenosylcobinamide-GDP and alpha-ribazole 5'-phosphate. In Salmonella dublin (strain CT_02021853), this protein is Adenosylcobinamide-GDP ribazoletransferase.